A 377-amino-acid polypeptide reads, in one-letter code: Nitric oxide reductase FlRd-NAD(+) reductase (377 aa).

The protein belongs to the FAD-dependent oxidoreductase family. FAD is required as a cofactor.

The protein resides in the cytoplasm. It catalyses the reaction 2 reduced [nitric oxide reductase rubredoxin domain] + NAD(+) + H(+) = 2 oxidized [nitric oxide reductase rubredoxin domain] + NADH. It functions in the pathway nitrogen metabolism; nitric oxide reduction. One of at least two accessory proteins for anaerobic nitric oxide (NO) reductase. Reduces the rubredoxin moiety of NO reductase. The polypeptide is Nitric oxide reductase FlRd-NAD(+) reductase (Enterobacter sp. (strain 638)).